We begin with the raw amino-acid sequence, 332 residues long: MEPFKHPIAILGAGSWGTALALVLARKGQKVRLWSYESDHVDEMQAEGVNNRYLPNYPFPETLKAYCDLKASLEGVTDILIVVPSFAFHEVITRMKPLIDAKTRIAWGTKGLAKGSRLLHEVVATELGQVPMAVISGPSLATEVAANLPTAVSLASNNSQFSKDLIERLHGQRFRVYKNDDMIGVELCGSVKNILAIATGISDGLKLGSNARAALITRGLTEMGRLVSVFGGKQETLTGLAGLGDLVLTCTDNQSRNRRFGLALGEGVDKKEAQQAIGQAIEGLYNTDQVHALAQKHAIEMPLTFQVHRILHEDLDPQQAVQELLERSPKAE.

Residues Ser15, Trp16, and Lys110 each coordinate NADPH. Sn-glycerol 3-phosphate-binding residues include Lys110, Gly137, and Ser139. Ala141 provides a ligand contact to NADPH. Residues Lys192, Asp245, Ser255, Arg256, and Asn257 each coordinate sn-glycerol 3-phosphate. The active-site Proton acceptor is Lys192. Arg256 provides a ligand contact to NADPH. Residue Glu282 participates in NADPH binding.

This sequence belongs to the NAD-dependent glycerol-3-phosphate dehydrogenase family.

It is found in the cytoplasm. The catalysed reaction is sn-glycerol 3-phosphate + NAD(+) = dihydroxyacetone phosphate + NADH + H(+). The enzyme catalyses sn-glycerol 3-phosphate + NADP(+) = dihydroxyacetone phosphate + NADPH + H(+). It participates in membrane lipid metabolism; glycerophospholipid metabolism. Functionally, catalyzes the reduction of the glycolytic intermediate dihydroxyacetone phosphate (DHAP) to sn-glycerol 3-phosphate (G3P), the key precursor for phospholipid synthesis. The sequence is that of Glycerol-3-phosphate dehydrogenase [NAD(P)+] from Coxiella burnetii (strain CbuG_Q212) (Coxiella burnetii (strain Q212)).